The sequence spans 155 residues: MRRRRAEVRKIAPDPVYSDILVAKLVNRIMWDGKKAVAQKIVYRSFEYIQEKSGKDPLEVFQKAIENVRPVLEVRPRRVGGATYQVPVEVQEPRKTSLALRWIVAAARAKKGKPMYVRLAEEILASYQGTGTAMKKKEDVHKMAEANRAFAHLRW.

Belongs to the universal ribosomal protein uS7 family. Part of the 30S ribosomal subunit. Contacts proteins S9 and S11.

Its function is as follows. One of the primary rRNA binding proteins, it binds directly to 16S rRNA where it nucleates assembly of the head domain of the 30S subunit. Is located at the subunit interface close to the decoding center, probably blocks exit of the E-site tRNA. This is Small ribosomal subunit protein uS7 from Pseudothermotoga lettingae (strain ATCC BAA-301 / DSM 14385 / NBRC 107922 / TMO) (Thermotoga lettingae).